Here is a 198-residue protein sequence, read N- to C-terminus: dTTP/UTP pyrophosphatase (198 aa).

The active-site Proton acceptor is aspartate 75.

This sequence belongs to the Maf family. YhdE subfamily. The cofactor is a divalent metal cation.

Its subcellular location is the cytoplasm. The enzyme catalyses dTTP + H2O = dTMP + diphosphate + H(+). It catalyses the reaction UTP + H2O = UMP + diphosphate + H(+). Nucleoside triphosphate pyrophosphatase that hydrolyzes dTTP and UTP. May have a dual role in cell division arrest and in preventing the incorporation of modified nucleotides into cellular nucleic acids. This chain is dTTP/UTP pyrophosphatase, found in Wolbachia pipientis wMel.